We begin with the raw amino-acid sequence, 549 residues long: DNA ligase 1 (549 aa).

Glutamate 212 contacts ATP. Lysine 214 (N6-AMP-lysine intermediate) is an active-site residue. Arginine 219, arginine 234, glutamate 264, phenylalanine 310, arginine 387, and lysine 393 together coordinate ATP.

This sequence belongs to the ATP-dependent DNA ligase family. Requires Mg(2+) as cofactor.

It carries out the reaction ATP + (deoxyribonucleotide)n-3'-hydroxyl + 5'-phospho-(deoxyribonucleotide)m = (deoxyribonucleotide)n+m + AMP + diphosphate.. In terms of biological role, DNA ligase that seals nicks in double-stranded DNA during DNA replication, DNA recombination and DNA repair. In Methanosarcina barkeri (strain Fusaro / DSM 804), this protein is DNA ligase 1.